Consider the following 284-residue polypeptide: Urease accessory protein UreD (284 aa).

The protein belongs to the UreD family. UreD, UreF and UreG form a complex that acts as a GTP-hydrolysis-dependent molecular chaperone, activating the urease apoprotein by helping to assemble the nickel containing metallocenter of UreC. The UreE protein probably delivers the nickel.

The protein localises to the cytoplasm. Required for maturation of urease via the functional incorporation of the urease nickel metallocenter. The sequence is that of Urease accessory protein UreD from Bordetella bronchiseptica (strain ATCC BAA-588 / NCTC 13252 / RB50) (Alcaligenes bronchisepticus).